The sequence spans 136 residues: Histone H3 (136 aa).

It belongs to the histone H3 family. The nucleosome is a histone octamer containing two molecules each of H2A, H2B, H3 and H4 assembled in one H3-H4 heterotetramer and two H2A-H2B heterodimers. The octamer wraps approximately 147 bp of DNA.

It localises to the nucleomorph. Its subcellular location is the chromosome. Core component of nucleosome. Nucleosomes wrap and compact DNA into chromatin, limiting DNA accessibility to the cellular machineries which require DNA as a template. Histones thereby play a central role in transcription regulation, DNA repair, DNA replication and chromosomal stability. DNA accessibility is regulated via a complex set of post-translational modifications of histones, also called histone code, and nucleosome remodeling. The polypeptide is Histone H3 (Guillardia theta (Cryptophyte)).